The primary structure comprises 558 residues: Urocanate hydratase (558 aa).

Residues 54 to 55 (GG), Q132, 178 to 180 (GMG), E198, 244 to 245 (NA), 265 to 269 (QTSAH), 275 to 276 (YL), and Y324 each bind NAD(+). Residue C412 is part of the active site. G494 provides a ligand contact to NAD(+).

It belongs to the urocanase family. It depends on NAD(+) as a cofactor.

It is found in the cytoplasm. It carries out the reaction 4-imidazolone-5-propanoate = trans-urocanate + H2O. It participates in amino-acid degradation; L-histidine degradation into L-glutamate; N-formimidoyl-L-glutamate from L-histidine: step 2/3. In terms of biological role, catalyzes the conversion of urocanate to 4-imidazolone-5-propionate. This Acinetobacter baumannii (strain AB307-0294) protein is Urocanate hydratase.